An 808-amino-acid polypeptide reads, in one-letter code: Zinc finger protein 148 (808 aa).

2 disordered regions span residues 15 to 86 (SPVG…ISQD) and 131 to 162 (DSLILNKKEKKPGRDPSDCHKKKKRKQRSPAK). Residues 56 to 73 (AEDDDDEDEEEDDDDDLA) are compositionally biased toward acidic residues. The span at 150–159 (HKKKKRKQRS) shows a compositional bias: basic residues. 4 C2H2-type zinc fingers span residues 180-202 (HICEHCNAAFRTNYHLQRHVFIH), 208-230 (FQCNQCDMRFIQKYLLQRHEKIH), 236-258 (FRCDECGMKFIQKYHMERHKRTH), and 264-287 (YQCDYCHQFFSRTDRVLKHRRMCH). 3 disordered regions span residues 305–338 (RTPENLGFSFPAKDCTLPKKKRQKTSDKSRASIT), 596–617 (SINSSDESSPAEALVTSSQAPP), and 705–736 (SFSGDETNPSSVSPTEDFLDQVTSPKKTDPQS). Polar residues-rich tracts occupy residues 705-718 (SFSGDETNPSSVSP) and 725-736 (QVTSPKKTDPQS).

Belongs to the krueppel C2H2-type zinc-finger protein family.

The protein localises to the nucleus. Involved in transcriptional regulation. Represses the transcription of a number of genes. Required for primitive and definitive hematopoiesis during embryonic development. The polypeptide is Zinc finger protein 148 (znf148) (Danio rerio (Zebrafish)).